Consider the following 467-residue polypeptide: Cysteine--tRNA ligase (467 aa).

C29 is a Zn(2+) binding site. Positions 31–41 match the 'HIGH' region motif; the sequence is ATVQGEPHIGH. Zn(2+)-binding residues include C207, H232, and E236. The 'KMSKS' region signature appears at 263 to 267; sequence KMSKS. ATP is bound at residue K266. The tract at residues 446–467 is disordered; it reads IDVTDTPNGPEWSLRTARGKAN.

This sequence belongs to the class-I aminoacyl-tRNA synthetase family. Monomer. The cofactor is Zn(2+).

The protein resides in the cytoplasm. It catalyses the reaction tRNA(Cys) + L-cysteine + ATP = L-cysteinyl-tRNA(Cys) + AMP + diphosphate. The polypeptide is Cysteine--tRNA ligase (Nocardia farcinica (strain IFM 10152)).